A 432-amino-acid chain; its full sequence is 3-phosphoshikimate 1-carboxyvinyltransferase (432 aa).

3-phosphoshikimate-binding residues include Lys23, Ser24, and Arg28. Position 23 (Lys23) interacts with phosphoenolpyruvate. Gly96 and Arg125 together coordinate phosphoenolpyruvate. Ser170, Gln172, Asp318, and Lys345 together coordinate 3-phosphoshikimate. Phosphoenolpyruvate is bound at residue Gln172. Catalysis depends on Asp318, which acts as the Proton acceptor. The phosphoenolpyruvate site is built by Arg349 and Arg391.

Belongs to the EPSP synthase family. Monomer.

The protein localises to the cytoplasm. The enzyme catalyses 3-phosphoshikimate + phosphoenolpyruvate = 5-O-(1-carboxyvinyl)-3-phosphoshikimate + phosphate. It participates in metabolic intermediate biosynthesis; chorismate biosynthesis; chorismate from D-erythrose 4-phosphate and phosphoenolpyruvate: step 6/7. Functionally, catalyzes the transfer of the enolpyruvyl moiety of phosphoenolpyruvate (PEP) to the 5-hydroxyl of shikimate-3-phosphate (S3P) to produce enolpyruvyl shikimate-3-phosphate and inorganic phosphate. The chain is 3-phosphoshikimate 1-carboxyvinyltransferase from Gloeobacter violaceus (strain ATCC 29082 / PCC 7421).